We begin with the raw amino-acid sequence, 2715 residues long: Histone-lysine N-methyltransferase 2B (2715 aa).

Residues 1–11 show a composition bias toward gly residues; it reads MAAAAGGGSCP. Disordered regions lie at residues 1–65, 81–302, 320–518, and 532–771; these read MAAA…GEDT, RRLW…GGLP, SLGL…PKST, and VSAR…QMPP. At Ala2 the chain carries N-acetylalanine. The segment covering 12–24 has biased composition (low complexity); that stretch reads GPGSARGRFPGRP. A Menin-binding motif (MBM) motif is present at residues 17–36; the sequence is RGRFPGRPRGAGGGGGRGGR. Gly residues-rich tracts occupy residues 25–38 and 49–60; these read RGAGGGGGRGGRGN and RGGGATGPGGAE. The segment at residues 37–44 is a DNA-binding region (a.T hook 1); the sequence is GNGAERVR. Residues 109-123 are compositionally biased toward acidic residues; that stretch reads PEEESSDGESDEEEF. A DNA-binding region (a.T hook 2) is located at residues 110 to 117; sequence EEESSDGE. Residues Ser113, Ser114, and Ser118 each carry the phosphoserine modification. Residues 144–158 show a composition bias toward basic residues; that stretch reads QRGRAPRGRGRKHKT. Positions 160-176 are enriched in pro residues; sequence PLPPPRLADVAPTPPKT. Positions 199–208 are enriched in low complexity; the sequence is RAQAPQAPRS. Position 351 is a phosphoserine (Ser351). The segment at residues 357–365 is a DNA-binding region (a.T hook 3); sequence QEQKLDDEE. Residues 361-374 show a composition bias toward acidic residues; that stretch reads LDDEEEEKKEEEEK. Over residues 375 to 387 the composition is skewed to basic and acidic residues; it reads DKEGEEKEERAVA. Positions 401 to 449 are enriched in pro residues; the sequence is LPPPPLTPPAPSPPPPLPPPSTSPPPPLCPPPPPPVSPPPLPSPPPPPA. The segment covering 545–556 has biased composition (basic and acidic residues); that stretch reads RFMDEDPPKPPK. Residues 568-596 are compositionally biased toward pro residues; sequence TTSPPVPQEPAPVPSPPRAPTPPSTPVPL. The segment covering 597 to 608 has biased composition (basic and acidic residues); it reads PEKRRSILREPT. The span at 618–637 shows a compositional bias: pro residues; it reads LPPPPPAPPPPPAPSPPPAP. Low complexity predominate over residues 731-751; the sequence is PQTQAQLLQPLQALQTQLLPQ. Positions 752–769 are enriched in pro residues; sequence ALPPPQPQLQPPPSPQQM. Lys805 is covalently cross-linked (Glycyl lysine isopeptide (Lys-Gly) (interchain with G-Cter in SUMO2)). 2 disordered regions span residues 819–868 and 894–959; these read PLSP…GPRI and SALP…HHGK. Phosphoserine is present on residues Ser821, Ser844, and Ser861. Residues 836-857 are compositionally biased toward basic and acidic residues; the sequence is ISDRGPVRSEDESVEAKRERPS. Positions 907–917 are enriched in low complexity; the sequence is EDTSSASETES. Position 936 is a phosphoserine (Ser936). Positions 948–959 are enriched in basic residues; that stretch reads TPRRSLPSHHGK. The CXXC-type zinc finger occupies 959–1006; it reads KKMRMARCGHCRGCLRVQDCGSCVNCLDKPKFGGPNTKKQCCVYRKCD. 8 residues coordinate Zn(2+): Cys966, Cys969, Cys972, Cys978, Cys981, Cys984, Cys1000, and Cys1005. The segment at 1027–1132 is disordered; sequence LLPWDSDESP…RPRKPTLQPV (106 aa). Phosphoserine is present on residues Ser1032, Ser1035, Ser1092, and Ser1095. Lys1136 is covalently cross-linked (Glycyl lysine isopeptide (Lys-Gly) (interchain with G-Cter in SUMO2)). The disordered stretch occupies residues 1146–1166; sequence LAPGPFASFPNGWTGKQKSPD. 3 consecutive PHD-type zinc fingers follow at residues 1201 to 1252, 1249 to 1303, and 1335 to 1396; these read PMVC…CKFC, CKFC…CVRC, and GNYC…CAGA. A Bromo domain is found at 1404–1504; sequence ALSGALQGGL…GLLLKLLESA (101 aa). A disordered region spans residues 1545-1567; that stretch reads QQEPETPESGQPPGDPSAAFQGK. The C2HC pre-PHD-type zinc finger occupies 1578-1618; that stretch reads PRQCALCLKYGDADSKEAGRLLYIGQNEWTHVNCAIWSAEV. Residues 1639-1686 form a PHD-type 4 zinc finger; that stretch reads MRCELCLKPGATVGCCLSSCLSNFHFMCARASYCIFQDDKKVFCQKHT. One can recognise an FYR N-terminal domain in the interval 1727–1783; sequence AINVLIGSIRIDSLGTLSDLSDCEGRLFPIGYQCSRLYWSTVDARRRCWYRCRILEY. 4 disordered regions span residues 1806–1978, 2008–2093, 2118–2162, and 2280–2412; these read HSPA…PDFE, VAAG…VVRA, LKNL…PTRT, and RVST…RTGP. The segment covering 1876-1894 has biased composition (low complexity); sequence PLGGVSFGPLPSPGSPSSL. Residues Ser1930 and Ser1936 each carry the phosphoserine modification. Residues 1960-1972 are compositionally biased toward pro residues; sequence PPGPAPSPPPPED. Residues 2062–2072 show a composition bias toward acidic residues; the sequence is DGVDDGTDSEA. 2 positions are modified to phosphothreonine: Thr2068 and Thr2083. Polar residues predominate over residues 2144 to 2153; sequence NGSQPSQGLT. Residues Ser2288 and Ser2348 each carry the phosphoserine modification. Low complexity predominate over residues 2342–2351; the sequence is EPAGEESPGP. Residues 2359 to 2373 show a composition bias toward pro residues; that stretch reads LPLPEDGPPQVPDGP. The 82-residue stretch at 2411–2492 folds into the FYR C-terminal domain; it reads GPHLRFEISS…QRCQHYKFRY (82 aa). The short motif at 2508 to 2513 is the WDR5 interaction motif (WIN) element; sequence GAARAE. The SET domain maps to 2575 to 2691; that stretch reads EAVGVYRSAI…RGEELTYDYK (117 aa). Residues His2585, Arg2587, Tyr2629, and 2652–2653 contribute to the S-adenosyl-L-methionine site; that span reads NH. Cys2655 and Cys2703 together coordinate Zn(2+). Residues 2699-2715 form the Post-SET domain; the sequence is NKLPCNCGAKRCRRFLN. Asn2704 serves as a coordination point for S-adenosyl-L-methionine. 2 residues coordinate Zn(2+): Cys2705 and Cys2710.

Belongs to the class V-like SAM-binding methyltransferase superfamily. Histone-lysine methyltransferase family. TRX/MLL subfamily. As to quaternary structure, component of the menin-associated histone methyltransferase complex, at least composed of KMT2B/MLL4, ASH2L, RBBP5, WDR5, DPY30, MEN1; the complex interacts with POLR2A and POLR2B via MEN1. Interacts with NFE2. Interacts with KDM6B. Interacts (via WIN motif) with WDR5. Interacts (via MBM motif) with MEN1. Forms a core complex with the evolutionary conserved subcomplex WRAD composed of WDR5, RBBP5, ASH2L/ASH2 and DPY30 subunits; WRAD differentially stimulates the methyltransferase activity. As to expression, widely expressed. Highest levels in testis. Also found in brain with higher expression in the cerebellum than in any other region, bone marrow, heart, muscle, kidney, placenta, spleen, thymus, prostate, ovary, intestine, colon, peripheral blood lymphocytes and pancreas. Often amplified in pancreatic carcinomas.

It localises to the nucleus. It carries out the reaction L-lysyl(4)-[histone H3] + S-adenosyl-L-methionine = N(6)-methyl-L-lysyl(4)-[histone H3] + S-adenosyl-L-homocysteine + H(+). It catalyses the reaction N(6)-methyl-L-lysyl(4)-[histone H3] + S-adenosyl-L-methionine = N(6),N(6)-dimethyl-L-lysyl(4)-[histone H3] + S-adenosyl-L-homocysteine + H(+). Histone methyltransferase that catalyzes methyl group transfer from S-adenosyl-L-methionine to the epsilon-amino group of 'Lys-4' of histone H3 (H3K4) via a non-processive mechanism. Part of chromatin remodeling machinery predominantly forms H3K4me1 and H3K4me2 methylation marks at active chromatin sites where transcription and DNA repair take place. Likely plays a redundant role with KMT2C in enriching H3K4me1 marks on primed and active enhancer elements. Plays a central role in beta-globin locus transcription regulation by being recruited by NFE2. Plays an important role in controlling bulk H3K4me during oocyte growth and preimplantation development. Required during the transcriptionally active period of oocyte growth for the establishment and/or maintenance of bulk H3K4 trimethylation (H3K4me3), global transcriptional silencing that preceeds resumption of meiosis, oocyte survival and normal zygotic genome activation. The protein is Histone-lysine N-methyltransferase 2B (KMT2B) of Homo sapiens (Human).